Consider the following 519-residue polypeptide: Aldehyde dehydrogenase, mitochondrial (519 aa).

The N-terminal 19 residues, M1–L19, are a transit peptide targeting the mitochondrion. The SIFI-degron signature appears at G12 to A26. Residues K54, K75, K80, and K161 each carry the N6-acetyllysine modification. NAD(+) is bound at residue G264–G269. The active-site Proton acceptor is the E287. C321 (nucleophile) is an active-site residue. K370, K377, K385, K409, K428, K430, K443, and K453 each carry N6-acetyllysine.

The protein belongs to the aldehyde dehydrogenase family. As to quaternary structure, homotetramer. Post-translationally, in response to mitochondrial stress, the precursor protein is ubiquitinated by the SIFI complex in the cytoplasm before mitochondrial import, leading to its degradation. Within the SIFI complex, UBR4 initiates ubiquitin chain that are further elongated or branched by KCMF1.

The protein resides in the mitochondrion matrix. It catalyses the reaction an aldehyde + NAD(+) + H2O = a carboxylate + NADH + 2 H(+). It functions in the pathway alcohol metabolism; ethanol degradation; acetate from ethanol: step 2/2. Functionally, required for clearance of cellular formaldehyde, a cytotoxic and carcinogenic metabolite that induces DNA damage. This is Aldehyde dehydrogenase, mitochondrial (Aldh2) from Rattus norvegicus (Rat).